The sequence spans 309 residues: Porphobilinogen deaminase (309 aa).

Cys244 carries the post-translational modification S-(dipyrrolylmethanemethyl)cysteine.

This sequence belongs to the HMBS family. In terms of assembly, monomer. Requires dipyrromethane as cofactor.

The catalysed reaction is 4 porphobilinogen + H2O = hydroxymethylbilane + 4 NH4(+). Its pathway is porphyrin-containing compound metabolism; protoporphyrin-IX biosynthesis; coproporphyrinogen-III from 5-aminolevulinate: step 2/4. Functionally, tetrapolymerization of the monopyrrole PBG into the hydroxymethylbilane pre-uroporphyrinogen in several discrete steps. The sequence is that of Porphobilinogen deaminase from Listeria monocytogenes serotype 4a (strain HCC23).